We begin with the raw amino-acid sequence, 235 residues long: Putative 4'-phosphopantetheinyl transferase HI_0152 (235 aa).

The Mg(2+) site is built by D112, E114, and E155.

Belongs to the P-Pant transferase superfamily. Gsp/Sfp/HetI/AcpT family. Mg(2+) serves as cofactor.

In terms of biological role, may transfer the 4'-phosphopantetheine moiety from coenzyme A (CoA) to a serine residue of a carrier protein domain. This Haemophilus influenzae (strain ATCC 51907 / DSM 11121 / KW20 / Rd) protein is Putative 4'-phosphopantetheinyl transferase HI_0152.